A 270-amino-acid polypeptide reads, in one-letter code: tRNA pseudouridine synthase A (270 aa).

The Nucleophile role is filled by Asp-60. The interval 107 to 111 is RNA binding; the sequence is FHARF. Tyr-118 is a binding site for substrate. The segment at 168-172 is interaction with tRNA; the sequence is QCQSR.

Belongs to the tRNA pseudouridine synthase TruA family. Homodimer.

It carries out the reaction uridine(38/39/40) in tRNA = pseudouridine(38/39/40) in tRNA. Formation of pseudouridine at positions 38, 39 and 40 in the anticodon stem and loop of transfer RNAs. The chain is tRNA pseudouridine synthase A from Enterobacter sp. (strain 638).